The primary structure comprises 123 residues: Protein crumbs homolog 3 (123 aa).

The signal sequence occupies residues 1 to 26; sequence MASPGLGLLLALGLPLLPARWGRAWG. Over 27-59 the chain is Extracellular; the sequence is QTLDPHVNENGTITPSAPGSGSNGALSQEAITA. N36 carries N-linked (GlcNAc...) asparagine glycosylation. A helical membrane pass occupies residues 60 to 80; that stretch reads IIVVFSLLAAVLLAVGLVLLL. Residues 81-120 lie on the Cytoplasmic side of the membrane; it reads RKLREKRQTQGTYRPSSEEQFNHAAEARAPQDSKETVRGC. The interval 87 to 123 is disordered; that stretch reads RQTQGTYRPSSEEQFNHAAEARAPQDSKETVRGCLPI. The segment covering 96-117 has biased composition (basic and acidic residues); that stretch reads SSEEQFNHAAEARAPQDSKETV. The PDZ-binding signature appears at 119 to 123; sequence GCLPI.

As to quaternary structure, component of a complex composed of CRB3, PALS1 and PATJ. Interacts (via C-terminus) with PALS1 (via PDZ domain). Interacts with PARD6A. Interacts (via intracellular domain) with EPB41L5. Interacts with WDR83.

It localises to the apical cell membrane. Its subcellular location is the cell junction. The protein resides in the tight junction. Functionally, involved in the establishment of cell polarity in mammalian epithelial cells. Regulates the morphogenesis of tight junctions. Involved in promoting phosphorylation and cytoplasmic retention of transcriptional coactivators YAP1 and WWTR1/TAZ which leads to suppression of TGFB1-dependent transcription of target genes such as CCN2/CTGF, SERPINE1/PAI1, SNAI1/SNAIL1 and SMAD7. The protein is Protein crumbs homolog 3 of Canis lupus familiaris (Dog).